Reading from the N-terminus, the 254-residue chain is 3-deoxy-manno-octulosonate cytidylyltransferase (254 aa).

This sequence belongs to the KdsB family.

The protein localises to the cytoplasm. The enzyme catalyses 3-deoxy-alpha-D-manno-oct-2-ulosonate + CTP = CMP-3-deoxy-beta-D-manno-octulosonate + diphosphate. It functions in the pathway nucleotide-sugar biosynthesis; CMP-3-deoxy-D-manno-octulosonate biosynthesis; CMP-3-deoxy-D-manno-octulosonate from 3-deoxy-D-manno-octulosonate and CTP: step 1/1. Its pathway is bacterial outer membrane biogenesis; lipopolysaccharide biosynthesis. Its function is as follows. Activates KDO (a required 8-carbon sugar) for incorporation into bacterial lipopolysaccharide in Gram-negative bacteria. In Pseudomonas entomophila (strain L48), this protein is 3-deoxy-manno-octulosonate cytidylyltransferase.